The following is a 458-amino-acid chain: UDP-N-acetylmuramate--L-alanine ligase (458 aa).

Position 118–124 (118–124 (GTHGKTT)) interacts with ATP.

Belongs to the MurCDEF family.

The protein resides in the cytoplasm. It catalyses the reaction UDP-N-acetyl-alpha-D-muramate + L-alanine + ATP = UDP-N-acetyl-alpha-D-muramoyl-L-alanine + ADP + phosphate + H(+). It functions in the pathway cell wall biogenesis; peptidoglycan biosynthesis. In terms of biological role, cell wall formation. This chain is UDP-N-acetylmuramate--L-alanine ligase, found in Clostridium botulinum (strain Okra / Type B1).